A 354-amino-acid polypeptide reads, in one-letter code: Peptide chain release factor 1 (354 aa).

Q230 bears the N5-methylglutamine mark.

The protein belongs to the prokaryotic/mitochondrial release factor family. Methylated by PrmC. Methylation increases the termination efficiency of RF1.

The protein resides in the cytoplasm. Its function is as follows. Peptide chain release factor 1 directs the termination of translation in response to the peptide chain termination codons UAG and UAA. This Leptospira interrogans serogroup Icterohaemorrhagiae serovar copenhageni (strain Fiocruz L1-130) protein is Peptide chain release factor 1.